The primary structure comprises 433 residues: D-amino acid dehydrogenase (433 aa).

Position 3 to 17 (Val-3 to Trp-17) interacts with FAD.

This sequence belongs to the DadA oxidoreductase family. It depends on FAD as a cofactor.

It carries out the reaction a D-alpha-amino acid + A + H2O = a 2-oxocarboxylate + AH2 + NH4(+). Its pathway is amino-acid degradation; D-alanine degradation; NH(3) and pyruvate from D-alanine: step 1/1. Oxidative deamination of D-amino acids. This Erwinia tasmaniensis (strain DSM 17950 / CFBP 7177 / CIP 109463 / NCPPB 4357 / Et1/99) protein is D-amino acid dehydrogenase.